Consider the following 700-residue polypeptide: Elongation factor G (700 aa).

A tr-type G domain is found at 10-286 (NKVRNIGIMA…AVIDYLPNPL (277 aa)). GTP-binding positions include 19–26 (AHIDAGKT), 83–87 (DTPGH), and 137–140 (NKMD).

The protein belongs to the TRAFAC class translation factor GTPase superfamily. Classic translation factor GTPase family. EF-G/EF-2 subfamily.

The protein localises to the cytoplasm. In terms of biological role, catalyzes the GTP-dependent ribosomal translocation step during translation elongation. During this step, the ribosome changes from the pre-translocational (PRE) to the post-translocational (POST) state as the newly formed A-site-bound peptidyl-tRNA and P-site-bound deacylated tRNA move to the P and E sites, respectively. Catalyzes the coordinated movement of the two tRNA molecules, the mRNA and conformational changes in the ribosome. This is Elongation factor G from Rhodococcus opacus (strain B4).